Reading from the N-terminus, the 117-residue chain is CUE domain-containing protein CUE4 (117 aa).

Positions 27–74 are disordered; the sequence is QVPSRTVQDAKPAPSVATNDPSPEPVPSAPEERVARLNRHGSDRKRAV. Lysine 37 is covalently cross-linked (Glycyl lysine isopeptide (Lys-Gly) (interchain with G-Cter in ubiquitin)). Serine 48 is modified (phosphoserine). The span at 56–74 shows a compositional bias: basic and acidic residues; sequence PEERVARLNRHGSDRKRAV. The CUE domain maps to 74–116; that stretch reads VNSDMVEIVMTMAPHVPQEKVVQDLRNTGSIEHTMENIFAGKL.

In terms of processing, ubiquitinated.

It is found in the cytoplasm. The protein localises to the endoplasmic reticulum. The sequence is that of CUE domain-containing protein CUE4 (CUE4) from Saccharomyces cerevisiae (strain ATCC 204508 / S288c) (Baker's yeast).